A 241-amino-acid polypeptide reads, in one-letter code: Ribonuclease HII (241 aa).

Positions 27–227 (GPVAGVDEAG…REARSLRLED (201 aa)) constitute an RNase H type-2 domain. Residues D33, E34, and D128 each contribute to the a divalent metal cation site.

It belongs to the RNase HII family. It depends on Mn(2+) as a cofactor. Mg(2+) serves as cofactor.

The protein localises to the cytoplasm. The catalysed reaction is Endonucleolytic cleavage to 5'-phosphomonoester.. In terms of biological role, endonuclease that specifically degrades the RNA of RNA-DNA hybrids. This chain is Ribonuclease HII, found in Frankia alni (strain DSM 45986 / CECT 9034 / ACN14a).